The following is a 92-amino-acid chain: Kinetoplastid membrane protein 11 (92 aa).

Belongs to the KMP-11 family. In terms of assembly, monomer.

The protein resides in the cytoplasm. It localises to the cytoskeleton. Functionally, may be involved in the regulation of the cytoskeleton through interaction with the subpellicular microtubules. May be involved in parasite mobility and attachment to the surface of the host cell. Behaves as a strong immunogen during infection. The chain is Kinetoplastid membrane protein 11 (KMP-11/1) from Trypanosoma brucei brucei.